The sequence spans 449 residues: Probable magnetosome protein Mms48 (449 aa).

A signal peptide spans 1-18 (MLLRLIVLLIFMSPVVFA). The helical transmembrane segment at 40–60 (SNMPVLLAVILVVFLIFSALS) threads the bilayer. One copy of the TPR repeat lies at 323 to 356 (PDGHLAAGEAAFAVQKWGVARRHIMAALKIAPDA).

The protein resides in the magnetosome membrane. Its function is as follows. Overexpression in wild-type cells increases the number of cells with double magnetosome chains significantly. The 4 genes of this operon collectively influence magnetosome size and number. The protein is Probable magnetosome protein Mms48 of Magnetospirillum gryphiswaldense (strain DSM 6361 / JCM 21280 / NBRC 15271 / MSR-1).